The chain runs to 465 residues: Putrescine aminotransferase (465 aa).

Pyridoxal 5'-phosphate-binding positions include 150–151 (GT) and Gln274. Residue Lys300 is modified to N6-(pyridoxal phosphate)lysine. Thr332 provides a ligand contact to pyridoxal 5'-phosphate.

The protein belongs to the class-III pyridoxal-phosphate-dependent aminotransferase family. Putrescine aminotransferase subfamily. Requires pyridoxal 5'-phosphate as cofactor.

The enzyme catalyses an alkane-alpha,omega-diamine + 2-oxoglutarate = an omega-aminoaldehyde + L-glutamate. It carries out the reaction putrescine + 2-oxoglutarate = 1-pyrroline + L-glutamate + H2O. The catalysed reaction is cadaverine + 2-oxoglutarate = 5-aminopentanal + L-glutamate. It participates in amine and polyamine degradation; putrescine degradation; 4-aminobutanal from putrescine (transaminase route): step 1/1. Its function is as follows. Catalyzes the aminotransferase reaction from putrescine to 2-oxoglutarate, leading to glutamate and 4-aminobutanal, which spontaneously cyclizes to form 1-pyrroline. This is the first step in one of two pathways for putrescine degradation, where putrescine is converted into 4-aminobutanoate (gamma-aminobutyrate or GABA) via 4-aminobutanal. Also functions as a cadaverine transaminase in a a L-lysine degradation pathway to succinate that proceeds via cadaverine, glutarate and L-2-hydroxyglutarate. This Cronobacter sakazakii (strain ATCC BAA-894) (Enterobacter sakazakii) protein is Putrescine aminotransferase.